The primary structure comprises 462 residues: Receptor like protein 29 (462 aa).

A signal peptide spans 1-26 (MTMKRALPSPSSLLFFFLLITPLFLC). Over 27–441 (QENRVSASMP…SQASRYYRSC (415 aa)) the chain is Extracellular. A glycan (N-linked (GlcNAc...) asparagine) is linked at Asn139. LRR repeat units lie at residues 139–164 (NSSL…ISSL), 165–188 (KSLQ…IFSL), 190–212 (SLVH…LGNL), 213–236 (NNLV…ISQL), 238–260 (MLQK…VEKL), 261–284 (RSLS…ISNL), 286–308 (SLQY…LGFL), 309–331 (PKLQ…SYTK), 332–355 (LTNL…GFES), and 357–381 (PHVF…SFLR). N-linked (GlcNAc...) asparagine glycans are attached at residues Asn334, Asn363, and Asn416. A helical membrane pass occupies residues 442–462 (FFANALFPFALFLGLHQRWVL).

This sequence belongs to the RLP family.

The protein localises to the cell membrane. The sequence is that of Receptor like protein 29 from Arabidopsis thaliana (Mouse-ear cress).